The following is a 58-amino-acid chain: MTQVVLGEHEGIDSALRRFKRQVSKAGILADVKYHRHFETPLERRKRKAVAARRKRRF.

It belongs to the bacterial ribosomal protein bS21 family.

The polypeptide is Small ribosomal subunit protein bS21B (rpsU2) (Nostoc sp. (strain PCC 7120 / SAG 25.82 / UTEX 2576)).